The sequence spans 501 residues: ATP synthase subunit alpha (501 aa).

169–176 (GDRQTGKT) is a binding site for ATP.

The protein belongs to the ATPase alpha/beta chains family. F-type ATPases have 2 components, CF(1) - the catalytic core - and CF(0) - the membrane proton channel. CF(1) has five subunits: alpha(3), beta(3), gamma(1), delta(1), epsilon(1). CF(0) has three main subunits: a(1), b(2) and c(9-12). The alpha and beta chains form an alternating ring which encloses part of the gamma chain. CF(1) is attached to CF(0) by a central stalk formed by the gamma and epsilon chains, while a peripheral stalk is formed by the delta and b chains.

It is found in the cell membrane. It carries out the reaction ATP + H2O + 4 H(+)(in) = ADP + phosphate + 5 H(+)(out). Functionally, produces ATP from ADP in the presence of a proton gradient across the membrane. The alpha chain is a regulatory subunit. This is ATP synthase subunit alpha from Desulforamulus reducens (strain ATCC BAA-1160 / DSM 100696 / MI-1) (Desulfotomaculum reducens).